A 173-amino-acid chain; its full sequence is Secreted RxLR effector protein RXLR-C12 (173 aa).

The first 18 residues, 1–18, serve as a signal peptide directing secretion; sequence MLQFATAFLAISANVVMT. The short motif at 41–55 is the RxLR-dEER element; that stretch reads RRLRTHEIGTVPEER. Asn-155 carries an N-linked (GlcNAc...) asparagine glycan.

This sequence belongs to the RxLR effector family.

It is found in the secreted. The protein resides in the host cytoplasm. The protein localises to the host nucleus. Functionally, secreted effector that suppresses pattern-triggered immunity (PTI) in plant host. The polypeptide is Secreted RxLR effector protein RXLR-C12 (Plasmopara halstedii (Downy mildew of sunflower)).